Reading from the N-terminus, the 288-residue chain is Nucleotide-binding protein Neut_1559 (288 aa).

G8–S15 provides a ligand contact to ATP. Residue D57 to S60 coordinates GTP.

It belongs to the RapZ-like family.

Its function is as follows. Displays ATPase and GTPase activities. The chain is Nucleotide-binding protein Neut_1559 from Nitrosomonas eutropha (strain DSM 101675 / C91 / Nm57).